We begin with the raw amino-acid sequence, 436 residues long: Protein Z-dependent protease inhibitor (436 aa).

Positions 1–20 are cleaved as a signal peptide; the sequence is MRVVSSLFLPVLLAEVWLVS. N-linked (GlcNAc...) asparagine glycosylation is found at asparagine 23, asparagine 42, and asparagine 69. The segment at 128 to 145 is heparin-binding; it reads AGPLILPALFKRVKETFS. N-linked (GlcNAc...) asparagine glycosylation is found at asparagine 172, asparagine 189, and asparagine 287.

It belongs to the serpin family. In terms of processing, phosphorylated by FAM20C in the extracellular medium. Expressed by the liver and secreted in plasma.

It localises to the secreted. Its function is as follows. Inhibits activity of the coagulation protease factor Xa in the presence of PROZ, calcium and phospholipids. Also inhibits factor XIa in the absence of cofactors. This is Protein Z-dependent protease inhibitor (Serpina10) from Rattus norvegicus (Rat).